Consider the following 688-residue polypeptide: Transcription factor GTE9 (688 aa).

The tract at residues 1–36 (MTERNGGFPGDYCFEAPGGDYDEGSDSPRVSEGSNC) is disordered. The 107-residue stretch at 132 to 238 (TAVMLLMKQC…KFFEVRWKTL (107 aa)) folds into the Bromo domain. In terms of domain architecture, NET spans 280-361 (ENVVDPAKRV…EHLREIQNKK (82 aa)). Positions 423–505 (GNSLGSVSGD…AQNEKQLPPE (83 aa)) are disordered. At Ser478 the chain carries Phosphoserine. Polar residues predominate over residues 491–500 (QDGNSAQNEK). Residues 505-688 (EKSYRAAILK…EIDIEEGEID (184 aa)) are transcription activation domain. Residues 534–613 (TRDPEKLQRE…QSVELNENAK (80 aa)) are a coiled coil. A disordered region spans residues 660–688 (FMKQDEDEEEADPLTSPAPEIDIEEGEID).

In terms of assembly, interacts with BT1.

The protein localises to the nucleus. In Arabidopsis thaliana (Mouse-ear cress), this protein is Transcription factor GTE9 (GTE9).